Here is a 204-residue protein sequence, read N- to C-terminus: uncharacterized protein (204 aa).

Disordered stretches follow at residues 1-37 (MRAL…GSVS) and 159-204 (GYRP…DGEL). Low complexity predominate over residues 28 to 37 (GRGPRAGSVS). The region spanning 88–175 (PYRLYVERLD…LPKEKWPAEA (88 aa)) is the WGR domain. Basic and acidic residues-rich tracts occupy residues 166 to 179 (LPKE…EHES) and 188 to 204 (PEGH…DGEL).

This is an uncharacterized protein from Sinorhizobium fredii (strain NBRC 101917 / NGR234).